The sequence spans 695 residues: Pentatricopeptide repeat-containing protein 1, mitochondrial (695 aa).

6 PPR repeats span residues 133-169 (TQYW…RLQP), 170-204 (LECN…DLEP), 205-243 (SDAT…NFQL), 244-278 (NLKT…GHAV), 279-315 (TEET…GIKP), and 316-352 (SRHG…TILL). A disordered region spans residues 391 to 416 (QKLEGPPALPEARVTSRTQPEVETTA). 4 PPR repeats span residues 470–485 (EGFL…QPDI), 517–551 (DVTF…GIVP), 552–583 (NLRT…QVSP), and 584–618 (NIHI…SVPV). The disordered stretch occupies residues 672 to 695 (WQEFQNKPVGDQDTTDKAGGLRDG). Positions 685-695 (TTDKAGGLRDG) are enriched in basic and acidic residues.

Belongs to the PTCD1 family. As to quaternary structure, associates with mitochondrial leucine tRNAs. Interacts with ELAC2.

It localises to the mitochondrion. The protein resides in the mitochondrion matrix. Functionally, mitochondrial protein implicated in negative regulation of leucine tRNA levels, as well as negative regulation of mitochondria-encoded proteins and COX activity. Also affects the 3'-processing of mitochondrial tRNAs. This chain is Pentatricopeptide repeat-containing protein 1, mitochondrial (Ptcd1), found in Mus musculus (Mouse).